The sequence spans 568 residues: Oxygen-dependent choline dehydrogenase (568 aa).

Asp8 to Glu37 contributes to the FAD binding site. The active-site Proton acceptor is His473.

Belongs to the GMC oxidoreductase family. FAD serves as cofactor.

The catalysed reaction is choline + A = betaine aldehyde + AH2. The enzyme catalyses betaine aldehyde + NAD(+) + H2O = glycine betaine + NADH + 2 H(+). It functions in the pathway amine and polyamine biosynthesis; betaine biosynthesis via choline pathway; betaine aldehyde from choline (cytochrome c reductase route): step 1/1. Functionally, involved in the biosynthesis of the osmoprotectant glycine betaine. Catalyzes the oxidation of choline to betaine aldehyde and betaine aldehyde to glycine betaine at the same rate. This chain is Oxygen-dependent choline dehydrogenase, found in Staphylococcus haemolyticus (strain JCSC1435).